The sequence spans 742 residues: Photosystem I P700 chlorophyll a apoprotein A2 2 (742 aa).

8 consecutive transmembrane segments (helical) span residues 46-69 (IFATHFGHVAIIFLWASSLLFHVA), 135-158 (LYQGSVFLLLLAALFLFAGWLHLQ), 175-199 (LNHHLAGLFGVSSLAWAGHLIHVAI), 273-291 (MAHHHLAIAVIFIIAGHMY), 334-357 (LHFQLSIHLAALGTALSLVAQHMY), 373-399 (AALYTHHQYIAGFLMIGAFAHAGIFWI), 421-443 (AIISHLSWVSLFLGFHTLGIYVH), and 524-542 (FLVHHAIALGLHTTTLICV). [4Fe-4S] cluster-binding residues include Cys566 and Cys575. Helical transmembrane passes span 583-604 (SFYLALFWMLNLLGWVTFYWHW) and 651-673 (LSVWAWMFLFGHLVWATGFMFLI). Chlorophyll a contacts are provided by His662, Met670, and Tyr678. Trp679 contributes to the phylloquinone binding site. The helical transmembrane segment at 715 to 735 (LVGLAHFTVGYILTYAAFLIA) threads the bilayer.

This sequence belongs to the PsaA/PsaB family. As to quaternary structure, the PsaA/B heterodimer binds the P700 chlorophyll special pair and subsequent electron acceptors. PSI consists of a core antenna complex that captures photons, and an electron transfer chain that converts photonic excitation into a charge separation. The cyanobacterial PSI reaction center is composed of one copy each of PsaA,B,C,D,E,F,I,J,K,L,M and X, and forms trimeric complexes. It depends on PSI electron transfer chain: 5 chlorophyll a, 1 chlorophyll a', 2 phylloquinones and 3 4Fe-4S clusters. PSI core antenna: 90 chlorophyll a, 22 carotenoids, 3 phospholipids and 1 galactolipid. P700 is a chlorophyll a/chlorophyll a' dimer, A0 is one or more chlorophyll a, A1 is one or both phylloquinones and FX is a shared 4Fe-4S iron-sulfur center. as a cofactor.

The protein localises to the cellular thylakoid membrane. It carries out the reaction reduced [plastocyanin] + hnu + oxidized [2Fe-2S]-[ferredoxin] = oxidized [plastocyanin] + reduced [2Fe-2S]-[ferredoxin]. In terms of biological role, psaA and PsaB bind P700, the primary electron donor of photosystem I (PSI), as well as the electron acceptors A0, A1 and FX. PSI is a plastocyanin/cytochrome c6-ferredoxin oxidoreductase, converting photonic excitation into a charge separation, which transfers an electron from the donor P700 chlorophyll pair to the spectroscopically characterized acceptors A0, A1, FX, FA and FB in turn. Oxidized P700 is reduced on the lumenal side of the thylakoid membrane by plastocyanin or cytochrome c6. The chain is Photosystem I P700 chlorophyll a apoprotein A2 2 (psaB2) from Nostoc sp. (strain PCC 7120 / SAG 25.82 / UTEX 2576).